A 234-amino-acid polypeptide reads, in one-letter code: Leucyl/phenylalanyl-tRNA--protein transferase (234 aa).

This sequence belongs to the L/F-transferase family.

The protein localises to the cytoplasm. It catalyses the reaction N-terminal L-lysyl-[protein] + L-leucyl-tRNA(Leu) = N-terminal L-leucyl-L-lysyl-[protein] + tRNA(Leu) + H(+). The catalysed reaction is N-terminal L-arginyl-[protein] + L-leucyl-tRNA(Leu) = N-terminal L-leucyl-L-arginyl-[protein] + tRNA(Leu) + H(+). The enzyme catalyses L-phenylalanyl-tRNA(Phe) + an N-terminal L-alpha-aminoacyl-[protein] = an N-terminal L-phenylalanyl-L-alpha-aminoacyl-[protein] + tRNA(Phe). Functionally, functions in the N-end rule pathway of protein degradation where it conjugates Leu, Phe and, less efficiently, Met from aminoacyl-tRNAs to the N-termini of proteins containing an N-terminal arginine or lysine. The chain is Leucyl/phenylalanyl-tRNA--protein transferase from Salmonella agona (strain SL483).